The sequence spans 66 residues: COP-associated protein (66 aa).

Residues 1 to 66 (MKVTFQVPSI…ALLDAGQEVV (66 aa)) form the HMA domain. Residues Cys12 and Cys15 each coordinate Cu cation.

Part of a cation-transporting system which is associated with copper export out of the H.pylori cells. In Helicobacter pylori (strain J99 / ATCC 700824) (Campylobacter pylori J99), this protein is COP-associated protein (copP).